The sequence spans 276 residues: Undecaprenyl-diphosphatase (276 aa).

The next 8 helical transmembrane spans lie at 6 to 26 (IEIL…WLPI), 49 to 69 (EMFF…MFWN), 89 to 109 (FSLW…GILF), 117 to 137 (LHTP…FIVI), 151 to 171 (LADI…LSLI), 181 to 201 (IIGA…TFFL), 224 to 244 (AELL…VFVI), and 256 to 276 (FKVF…ITAI).

The protein belongs to the UppP family.

It is found in the cell membrane. It carries out the reaction di-trans,octa-cis-undecaprenyl diphosphate + H2O = di-trans,octa-cis-undecaprenyl phosphate + phosphate + H(+). Catalyzes the dephosphorylation of undecaprenyl diphosphate (UPP). Confers resistance to bacitracin. This Enterococcus faecalis (Streptococcus faecalis) protein is Undecaprenyl-diphosphatase.